The primary structure comprises 464 residues: tRNA-2-methylthio-N(6)-dimethylallyladenosine synthase (464 aa).

In terms of domain architecture, MTTase N-terminal spans 19-135 (GSYWITTFGC…LENLLGKVDL (117 aa)). Positions 28, 64, 98, 170, 174, and 177 each coordinate [4Fe-4S] cluster. Residues 156–394 (RESSICGWVN…DLVEKTARSR (239 aa)) form the Radical SAM core domain. The region spanning 396–464 (QRYIDNIESV…PFSLTGELSL (69 aa)) is the TRAM domain.

Belongs to the methylthiotransferase family. MiaB subfamily. Monomer. [4Fe-4S] cluster is required as a cofactor.

It is found in the cytoplasm. It catalyses the reaction N(6)-dimethylallyladenosine(37) in tRNA + (sulfur carrier)-SH + AH2 + 2 S-adenosyl-L-methionine = 2-methylsulfanyl-N(6)-dimethylallyladenosine(37) in tRNA + (sulfur carrier)-H + 5'-deoxyadenosine + L-methionine + A + S-adenosyl-L-homocysteine + 2 H(+). Functionally, catalyzes the methylthiolation of N6-(dimethylallyl)adenosine (i(6)A), leading to the formation of 2-methylthio-N6-(dimethylallyl)adenosine (ms(2)i(6)A) at position 37 in tRNAs that read codons beginning with uridine. This chain is tRNA-2-methylthio-N(6)-dimethylallyladenosine synthase, found in Prochlorococcus marinus (strain MIT 9301).